A 504-amino-acid chain; its full sequence is Fumitremorgin C monooxygenase (504 aa).

A helical transmembrane segment spans residues 12–32 (LGVVGASLIVILGIILLFPLG). Residue Cys-442 participates in heme binding.

Belongs to the cytochrome P450 family. Heme serves as cofactor.

The protein resides in the membrane. It carries out the reaction fumitremorgin C + 2 reduced [NADPH--hemoprotein reductase] + 2 O2 = 12alpha,13alpha-dihydroxyfumitremorgin C + 2 oxidized [NADPH--hemoprotein reductase] + 2 H2O + 2 H(+). Its pathway is mycotoxin biosynthesis. Functionally, cytochrome P450 monooxygenase; part of the gene cluster that mediates the biosynthesis of fumitremorgins, indole alkaloids that carry not only intriguing chemical structures, but also interesting biological and pharmacological activities. The biosynthesis of fumitremorgin-type alkaloids begins by condensation of the two amino acids L-tryptophan and L-proline to brevianamide F, catalyzed by the non-ribosomal peptide synthetase ftmA. Brevianamide F is then prenylated by the prenyltransferase ftmPT1/ftmB in the presence of dimethylallyl diphosphate, resulting in the formation of tryprostatin B. The three cytochrome P450 monooxygenases, ftmP450-1/ftmC, ftmP450-2/ftmE and ftmP450-3/FtmG, are responsible for the conversion of tryprostatin B to 6-hydroxytryprostatin B, tryprostatin A to fumitremorgin C and fumitremorgin C to 12,13-dihydroxyfumitremorgin C, respectively. The putative methyltransferase ftmMT/ftmD is expected for the conversion of 6-hydroxytryprostatin B to tryprostatin A. FtmPT2/FtmH catalyzes the prenylation of 12,13-dihydroxyfumitre-morgin C in the presence of dimethylallyl diphosphate, resulting in the formation of fumitremorgin B. Fumitremorgin B is further converted to verruculogen by ftmOx1/ftmF via the insertion of an endoperoxide bond between the two prenyl moieties. In some fungal species, verruculogen is further converted to fumitremorgin A, but the enzymes involved in this step have not been identified yet. This chain is Fumitremorgin C monooxygenase, found in Aspergillus fumigatus (Neosartorya fumigata).